Here is a 152-residue protein sequence, read N- to C-terminus: Aspartate carbamoyltransferase regulatory chain (152 aa).

Zn(2+) is bound by residues C108, C113, C136, and C139.

This sequence belongs to the PyrI family. In terms of assembly, contains catalytic and regulatory chains. Zn(2+) is required as a cofactor.

In terms of biological role, involved in allosteric regulation of aspartate carbamoyltransferase. This Thermococcus kodakarensis (strain ATCC BAA-918 / JCM 12380 / KOD1) (Pyrococcus kodakaraensis (strain KOD1)) protein is Aspartate carbamoyltransferase regulatory chain.